Consider the following 346-residue polypeptide: Phenylalanine--tRNA ligase alpha subunit (346 aa).

A Mg(2+)-binding site is contributed by Glu-259.

The protein belongs to the class-II aminoacyl-tRNA synthetase family. Phe-tRNA synthetase alpha subunit type 1 subfamily. Tetramer of two alpha and two beta subunits. It depends on Mg(2+) as a cofactor.

The protein localises to the cytoplasm. The enzyme catalyses tRNA(Phe) + L-phenylalanine + ATP = L-phenylalanyl-tRNA(Phe) + AMP + diphosphate + H(+). This is Phenylalanine--tRNA ligase alpha subunit from Lactococcus lactis subsp. lactis (strain IL1403) (Streptococcus lactis).